Consider the following 155-residue polypeptide: Ribosomal RNA large subunit methyltransferase H (155 aa).

Residues leucine 72, glycine 103, and 122-127 (LSPLTL) each bind S-adenosyl-L-methionine.

The protein belongs to the RNA methyltransferase RlmH family. As to quaternary structure, homodimer.

The protein resides in the cytoplasm. The catalysed reaction is pseudouridine(1915) in 23S rRNA + S-adenosyl-L-methionine = N(3)-methylpseudouridine(1915) in 23S rRNA + S-adenosyl-L-homocysteine + H(+). In terms of biological role, specifically methylates the pseudouridine at position 1915 (m3Psi1915) in 23S rRNA. This chain is Ribosomal RNA large subunit methyltransferase H, found in Aeromonas hydrophila subsp. hydrophila (strain ATCC 7966 / DSM 30187 / BCRC 13018 / CCUG 14551 / JCM 1027 / KCTC 2358 / NCIMB 9240 / NCTC 8049).